A 461-amino-acid polypeptide reads, in one-letter code: Bifunctional protein GlmU (461 aa).

The segment at Met-1 to Arg-235 is pyrophosphorylase. UDP-N-acetyl-alpha-D-glucosamine-binding positions include Leu-6–Gly-9, Lys-20, Gln-71, and Gly-77–Thr-78. Residue Asp-102 participates in Mg(2+) binding. 4 residues coordinate UDP-N-acetyl-alpha-D-glucosamine: Gly-145, Glu-160, Asn-175, and Asn-233. Asn-233 serves as a coordination point for Mg(2+). A linker region spans residues Trp-236–Ser-256. The segment at Gly-257–Glu-461 is N-acetyltransferase. The UDP-N-acetyl-alpha-D-glucosamine site is built by Arg-339 and Lys-357. His-369 functions as the Proton acceptor in the catalytic mechanism. UDP-N-acetyl-alpha-D-glucosamine-binding residues include Tyr-372 and Asn-383. Acetyl-CoA is bound by residues Ala-386, Ser-411, Gly-429, and Arg-446.

This sequence in the N-terminal section; belongs to the N-acetylglucosamine-1-phosphate uridyltransferase family. It in the C-terminal section; belongs to the transferase hexapeptide repeat family. Homotrimer. Mg(2+) is required as a cofactor.

The protein resides in the cytoplasm. The catalysed reaction is alpha-D-glucosamine 1-phosphate + acetyl-CoA = N-acetyl-alpha-D-glucosamine 1-phosphate + CoA + H(+). The enzyme catalyses N-acetyl-alpha-D-glucosamine 1-phosphate + UTP + H(+) = UDP-N-acetyl-alpha-D-glucosamine + diphosphate. It functions in the pathway nucleotide-sugar biosynthesis; UDP-N-acetyl-alpha-D-glucosamine biosynthesis; N-acetyl-alpha-D-glucosamine 1-phosphate from alpha-D-glucosamine 6-phosphate (route II): step 2/2. It participates in nucleotide-sugar biosynthesis; UDP-N-acetyl-alpha-D-glucosamine biosynthesis; UDP-N-acetyl-alpha-D-glucosamine from N-acetyl-alpha-D-glucosamine 1-phosphate: step 1/1. Its pathway is bacterial outer membrane biogenesis; LPS lipid A biosynthesis. In terms of biological role, catalyzes the last two sequential reactions in the de novo biosynthetic pathway for UDP-N-acetylglucosamine (UDP-GlcNAc). The C-terminal domain catalyzes the transfer of acetyl group from acetyl coenzyme A to glucosamine-1-phosphate (GlcN-1-P) to produce N-acetylglucosamine-1-phosphate (GlcNAc-1-P), which is converted into UDP-GlcNAc by the transfer of uridine 5-monophosphate (from uridine 5-triphosphate), a reaction catalyzed by the N-terminal domain. The polypeptide is Bifunctional protein GlmU (Hydrogenobaculum sp. (strain Y04AAS1)).